Here is a 467-residue protein sequence, read N- to C-terminus: Actinorhodin polyketide putative beta-ketoacyl synthase 1 (467 aa).

Residues 1-35 form a disordered region; sequence MPLDAAPVDPASRGPVSAFEPPSSHGADDDDDHRT. Residues 45–459 form the Ketosynthase family 3 (KS3) domain; sequence KRRVVITGVG…GFQSAMVLRD (415 aa). Catalysis depends on for beta-ketoacyl synthase activity residues C212, H352, and H389.

It belongs to the thiolase-like superfamily. Beta-ketoacyl-ACP synthases family.

It participates in antibiotic biosynthesis; actinorhodin biosynthesis. The protein is Actinorhodin polyketide putative beta-ketoacyl synthase 1 of Streptomyces coelicolor (strain ATCC BAA-471 / A3(2) / M145).